The sequence spans 4363 residues: AM-toxin synthetase AMT1 (4363 aa).

Residues 278-670 form an adenylation 1 region; that stretch reads AGQAKQRPHA…GSLLYVGRKD (393 aa). The 78-residue stretch at 810–887 folds into the Carrier 1 domain; the sequence is APDSVIARQL…ALAAIAKVIP (78 aa). At Ser-847 the chain carries O-(pantetheine 4'-phosphoryl)serine. The interval 926–1340 is condensation 1; it reads EDVYACTPLQ…TLGQIDVLTS (415 aa). The interval 1368–1765 is adenylation 2; sequence KQARTRPGAI…LGRKDTQIKI (398 aa). The Carrier 2 domain maps to 1884-1961; the sequence is PPVTDMEKHV…DQARHVTLLT (78 aa). The residue at position 1922 (Ser-1922) is an O-(pantetheine 4'-phosphoryl)serine. The segment at 1999–2410 is condensation 2; that stretch reads EDVYPCTPLQ…ASPSSSTLVS (412 aa). The segment at 2448–2853 is adenylation 3; sequence RKKALAAPQA…GRKDNQVKIR (406 aa). Positions 2977 to 3053 constitute a Carrier 3 domain; that stretch reads LPSTVMEETL…DLAACCTDRR (77 aa). Ser-3014 carries the O-(pantetheine 4'-phosphoryl)serine modification. The interval 3098 to 3503 is condensation 3; it reads VEDVYPCTPM…ELVSSIETLN (406 aa). The 77-residue stretch at 3730–3806 folds into the Carrier 4 domain; it reads PAVTAMQLAI…SLAVRATENT (77 aa). Position 3767 is an O-(pantetheine 4'-phosphoryl)serine (Ser-3767). The tract at residues 3850–4204 is condensation 4; the sequence is QDVLPCTSMQ…GLDEIVEHYA (355 aa).

This sequence belongs to the NRP synthetase family.

The protein operates within mycotoxin biosynthesis. In terms of biological role, nonribosomal peptide synthetase; part of the gene clusters that mediate the biosynthesis of AM-toxins, host-selective toxins (HSTs) causing Alternaria blotch on apple, a worldwide distributed disease. AM-toxins are cyclic depsipeptides containing the 3 residues 2-hydroxy-isovaleric acid (2-HIV), dehydroalanine, L-alanine which are common for all 3 AM-toxins I to III. The fourth precursor is L-alpha-amino-methoxyphenyl-valeric acid (L-Amv) for AM-toxin I, L-alpha-amino-phenyl-valeric acid (L-Apv) for AM-toxin II, and L-alpha-amino-hydroxyphenyl-valeric acid (L-Ahv) for AM-toxin III. AM-toxins have two target sites for affecting susceptible apple cells; they cause invagination of the plasma membrane and electrolyte loss, and chloroplast disorganization. The non-ribosomal peptide synthetase AMT1 contains 4 catalytic modules and is responsible for activation of each residue in AM-toxin. The aldo-keto reductase AMT2 catalyzes the conversion of 2-keto-isovaleric acid (2-KIV) to 2-hydroxy-isovaleric acid (2-HIV), one of the precursor residues incorporated by AMT1 during AM-toxin biosynthesis, by reduction of its ketone to an alcohol. The cytochrome P450 monooxygenase AMT3 and the thioesterase AMT4 are also important for AM-toxin production, but their exact function within the AM-toxin biosynthesis are not known yet. Up to 21 proteins (including AMT1 to AMT4) are predicted to be involved in AM-toxin biosynthesis since their expression ishighly up-regulated in AM-toxin-producing cultures. In Alternaria alternata (Alternaria rot fungus), this protein is AM-toxin synthetase AMT1.